A 138-amino-acid chain; its full sequence is UPF0201 protein PYRAB09730 (138 aa).

The protein belongs to the UPF0201 family.

The chain is UPF0201 protein PYRAB09730 from Pyrococcus abyssi (strain GE5 / Orsay).